Consider the following 132-residue polypeptide: Small ribosomal subunit protein uS8 (132 aa).

This sequence belongs to the universal ribosomal protein uS8 family. In terms of assembly, part of the 30S ribosomal subunit. Contacts proteins S5 and S12.

One of the primary rRNA binding proteins, it binds directly to 16S rRNA central domain where it helps coordinate assembly of the platform of the 30S subunit. The chain is Small ribosomal subunit protein uS8 from Paenarthrobacter aurescens (strain TC1).